Consider the following 440-residue polypeptide: Gap junction gamma-2 protein (440 aa).

The Cytoplasmic segment spans residues 1-21; sequence MTNMSWSFLTRLLEEIHNHST. The helical transmembrane segment at 22-42 threads the bilayer; it reads FVGKVWLTVLVVFRIVLTAVG. The Extracellular portion of the chain corresponds to 43 to 78; sequence GESIYSDEQSKFTCNTRQPGCDNVCYDAFAPLSHVR. The chain crosses the membrane as a helical span at residues 79–99; that stretch reads FWVFQIVVISTPSVMYLGYAV. The Cytoplasmic portion of the chain corresponds to 100-223; it reads HRLARASEQE…AQLVVRAAFE (124 aa). Residues 108–199 are disordered; that stretch reads QERRRALRRR…TPGPAGQHDG (92 aa). Over residues 112-124 the composition is skewed to basic residues; that stretch reads RALRRRPGTRRLP. A compositionally biased stretch (low complexity) spans 136-149; the sequence is PDTTDLGEAEPILA. Residues 150-173 show a composition bias toward acidic residues; sequence LEEDEDEEPGAPEGPGEDTEEERA. Residues 224–244 form a helical membrane-spanning segment; it reads VAFLVGQYLLYGFEVPPFFAC. Topologically, residues 245-264 are extracellular; the sequence is SRQPCPHVVDCFVSRPTEKT. Residues 265–285 form a helical membrane-spanning segment; the sequence is VFLLVMYVVSCLCLLLNLCEM. Over 286-440 the chain is Cytoplasmic; it reads AHLGLGSAQD…SRDGKATVWI (155 aa). The disordered stretch occupies residues 369–440; sequence DRDSPPCAGL…SRDGKATVWI (72 aa). Ser-372 carries the phosphoserine modification. Residues 388–401 show a composition bias toward low complexity; sequence VGGLASGTGSATSG.

The protein belongs to the connexin family. Gamma-type subfamily. A connexon is composed of a hexamer of connexins. Interacts with TJP1. In terms of tissue distribution, mainly expressed by oligodendrocytes in the central nervous system (at protein level).

Its subcellular location is the cell membrane. It is found in the cell junction. It localises to the gap junction. In terms of biological role, one gap junction consists of a cluster of closely packed pairs of transmembrane channels, the connexons, through which materials of low MW diffuse from one cell to a neighboring cell. May play a role in myelination in central and peripheral nervous systems. The chain is Gap junction gamma-2 protein (Gjc2) from Mus musculus (Mouse).